The chain runs to 295 residues: Trehalose/maltose transport system permease protein MalF (295 aa).

Transmembrane regions (helical) follow at residues 16–36, 79–99, 112–132, 146–166, 210–230, 236–256, and 267–287; these read LGYL…ILPV, VSFS…FALI, AIVL…WELM, ILGV…FAIV, ITLP…TIDA, IIYV…SLLA, and IGSA…IVYL. One can recognise an ABC transmembrane type-1 domain in the interval 75–286; that stretch reads TFVTVSFSFV…VLVLSFTIVY (212 aa).

Belongs to the binding-protein-dependent transport system permease family. As to quaternary structure, the complex is composed of two ATP-binding proteins (MalK), two transmembrane proteins (MalG and MalF) and a solute-binding protein (MalE).

It is found in the cell membrane. Its function is as follows. Part of the ABC transporter complex MalEFGK involved in trehalose/maltose import. Responsible for the translocation of the substrate across the membrane. The protein is Trehalose/maltose transport system permease protein MalF (malF) of Thermococcus litoralis (strain ATCC 51850 / DSM 5473 / JCM 8560 / NS-C).